A 118-amino-acid chain; its full sequence is NADH-quinone oxidoreductase subunit A 1 (118 aa).

Transmembrane regions (helical) follow at residues 1–21, 60–80, and 87–107; these read MLGV…FGLA, FYII…MYPW, and LGIF…VGYI.

Belongs to the complex I subunit 3 family. As to quaternary structure, NDH-1 is composed of 14 different subunits. Subunits NuoA, H, J, K, L, M, N constitute the membrane sector of the complex.

It localises to the cell inner membrane. The catalysed reaction is a quinone + NADH + 5 H(+)(in) = a quinol + NAD(+) + 4 H(+)(out). In terms of biological role, NDH-1 shuttles electrons from NADH, via FMN and iron-sulfur (Fe-S) centers, to quinones in the respiratory chain. The immediate electron acceptor for the enzyme in this species is believed to be ubiquinone. Couples the redox reaction to proton translocation (for every two electrons transferred, four hydrogen ions are translocated across the cytoplasmic membrane), and thus conserves the redox energy in a proton gradient. This Geobacter sulfurreducens (strain ATCC 51573 / DSM 12127 / PCA) protein is NADH-quinone oxidoreductase subunit A 1.